A 650-amino-acid chain; its full sequence is Tudor domain-containing protein 3 (650 aa).

Positions Thr147–Asn169 are disordered. Residues Leu192–Gly232 enclose the UBA domain. Disordered regions lie at residues Ser233–Thr271, Glu286–Asn406, and His427–Tyr447. Basic and acidic residues-rich tracts occupy residues Thr320 to Lys337 and His366 to Ser388. The segment covering Pro390–Asn406 has biased composition (polar residues). The region spanning Ser554–Glu614 is the Tudor domain. Residues Gly616–Asn650 form a disordered region. A compositionally biased stretch (basic and acidic residues) spans Leu622 to Pro632.

Component of mRNA stress granules.

It is found in the cytoplasm. Its subcellular location is the nucleus. In terms of biological role, scaffolding protein that specifically recognizes and binds dimethylarginine-containing proteins. Plays a role in the regulation of translation of target mRNAs by binding Arg/Gly-rich motifs (GAR) in dimethylarginine-containing proteins. In nucleus, acts as a coactivator: recognizes and binds asymmetric dimethylation on the core histone tails associated with transcriptional activation (H3R17me2a and H4R3me2a) and recruits proteins at these arginine-methylated loci. In cytoplasm, acts as an antiviral factor that participates in the assembly of stress granules together with G3BP1. This is Tudor domain-containing protein 3 (tdrd3) from Xenopus laevis (African clawed frog).